The sequence spans 235 residues: SMN complex subunit yip11/gem2 (235 aa).

The interval 1–34 is disordered; it reads MPSKRKRNPLQYQTSGSLDEETNQRSAFPQIDNN. Over residues 24 to 34 the composition is skewed to polar residues; that stretch reads QRSAFPQIDNN. Phosphoserine occurs at positions 117 and 118.

This sequence belongs to the gemin-2 family. As to quaternary structure, part of the core SMN complex at least composed of smn1, yip11/gem2, gem6, gem7 and gem8. Interacts with smn1; the interaction is direct.

It is found in the nucleus. The SMN complex catalyzes the assembly of small nuclear ribonucleoproteins (snRNPs), the building blocks of the spliceosome, and thereby plays an important role in the splicing of cellular pre-mRNAs. Most spliceosomal snRNPs contain a common set of Sm proteins smb1, smd1, smd2, smd3, sme1, smf1 and smg1 that assemble in a heptameric protein ring on the Sm site of the small nuclear RNA to form the core snRNP. In the cytosol, the Sm proteins smd1, smd2, sme1, smf1 and smg1 (5Sm) are trapped in an inactive 6S pICln-Sm complex by the chaperone saf5. To complete assembly of core snRNPs, the SMN complex accepts 5Sm from saf5. Binding of snRNA inside 5Sm ultimately triggers eviction of the SMN complex, thereby allowing binding of smd3 and smb1 to complete assembly of the core snRNP. Within the SMN complex, yip11/gem2 constrains the conformation of 5Sm, thereby promoting 5Sm binding to snRNA containing the snRNP code (a nonameric Sm site and a 3'-adjacent stem-loop), thus preventing progression of assembly until a cognate substrate is bound. The chain is SMN complex subunit yip11/gem2 (yip11) from Schizosaccharomyces pombe (strain 972 / ATCC 24843) (Fission yeast).